Here is a 489-residue protein sequence, read N- to C-terminus: UDP-N-acetylmuramoyl-L-alanyl-D-glutamate--2,6-diaminopimelate ligase (489 aa).

Residue Ser-30 participates in UDP-N-acetyl-alpha-D-muramoyl-L-alanyl-D-glutamate binding. 110-116 contributes to the ATP binding site; the sequence is GTNGKTT. UDP-N-acetyl-alpha-D-muramoyl-L-alanyl-D-glutamate is bound by residues 152–153, Ser-179, and Arg-187; that span reads TT. The residue at position 219 (Lys-219) is an N6-carboxylysine. Residues Arg-381, 405–408, Gly-458, and Glu-462 contribute to the meso-2,6-diaminopimelate site; that span reads DNPR. Residues 405–408 carry the Meso-diaminopimelate recognition motif motif; it reads DNPR.

The protein belongs to the MurCDEF family. MurE subfamily. Mg(2+) serves as cofactor. Carboxylation is probably crucial for Mg(2+) binding and, consequently, for the gamma-phosphate positioning of ATP.

It is found in the cytoplasm. The enzyme catalyses UDP-N-acetyl-alpha-D-muramoyl-L-alanyl-D-glutamate + meso-2,6-diaminopimelate + ATP = UDP-N-acetyl-alpha-D-muramoyl-L-alanyl-gamma-D-glutamyl-meso-2,6-diaminopimelate + ADP + phosphate + H(+). It functions in the pathway cell wall biogenesis; peptidoglycan biosynthesis. Its function is as follows. Catalyzes the addition of meso-diaminopimelic acid to the nucleotide precursor UDP-N-acetylmuramoyl-L-alanyl-D-glutamate (UMAG) in the biosynthesis of bacterial cell-wall peptidoglycan. This chain is UDP-N-acetylmuramoyl-L-alanyl-D-glutamate--2,6-diaminopimelate ligase, found in Syntrophomonas wolfei subsp. wolfei (strain DSM 2245B / Goettingen).